A 134-amino-acid chain; its full sequence is Small ribosomal subunit protein uS8c (134 aa).

Belongs to the universal ribosomal protein uS8 family. In terms of assembly, part of the 30S ribosomal subunit.

It localises to the plastid. Its subcellular location is the chloroplast. Functionally, one of the primary rRNA binding proteins, it binds directly to 16S rRNA central domain where it helps coordinate assembly of the platform of the 30S subunit. The sequence is that of Small ribosomal subunit protein uS8c (rps8) from Capsella bursa-pastoris (Shepherd's purse).